Consider the following 160-residue polypeptide: NADH-quinone oxidoreductase subunit I (160 aa).

4Fe-4S ferredoxin-type domains are found at residues 52–81 (RRYS…IEAE) and 91–120 (TRYD…EGPN). Positions 61, 64, 67, 71, 100, 103, 106, and 110 each coordinate [4Fe-4S] cluster.

The protein belongs to the complex I 23 kDa subunit family. In terms of assembly, NDH-1 is composed of 14 different subunits. Subunits NuoA, H, J, K, L, M, N constitute the membrane sector of the complex. [4Fe-4S] cluster is required as a cofactor.

The protein resides in the cell membrane. It catalyses the reaction a quinone + NADH + 5 H(+)(in) = a quinol + NAD(+) + 4 H(+)(out). NDH-1 shuttles electrons from NADH, via FMN and iron-sulfur (Fe-S) centers, to quinones in the respiratory chain. The immediate electron acceptor for the enzyme in this species is believed to be ubiquinone. Couples the redox reaction to proton translocation (for every two electrons transferred, four hydrogen ions are translocated across the cytoplasmic membrane), and thus conserves the redox energy in a proton gradient. This is NADH-quinone oxidoreductase subunit I from Wolbachia sp. subsp. Brugia malayi (strain TRS).